A 243-amino-acid polypeptide reads, in one-letter code: Pyridoxine 5'-phosphate synthase (243 aa).

3-amino-2-oxopropyl phosphate is bound at residue N9. 11-12 (DH) is a 1-deoxy-D-xylulose 5-phosphate binding site. A 3-amino-2-oxopropyl phosphate-binding site is contributed by R20. H45 acts as the Proton acceptor in catalysis. 1-deoxy-D-xylulose 5-phosphate contacts are provided by R47 and H52. The active-site Proton acceptor is E72. A 1-deoxy-D-xylulose 5-phosphate-binding site is contributed by T102. H193 (proton donor) is an active-site residue. 3-amino-2-oxopropyl phosphate is bound by residues G194 and 215-216 (GH).

The protein belongs to the PNP synthase family. In terms of assembly, homooctamer; tetramer of dimers.

It localises to the cytoplasm. It carries out the reaction 3-amino-2-oxopropyl phosphate + 1-deoxy-D-xylulose 5-phosphate = pyridoxine 5'-phosphate + phosphate + 2 H2O + H(+). It functions in the pathway cofactor biosynthesis; pyridoxine 5'-phosphate biosynthesis; pyridoxine 5'-phosphate from D-erythrose 4-phosphate: step 5/5. Catalyzes the complicated ring closure reaction between the two acyclic compounds 1-deoxy-D-xylulose-5-phosphate (DXP) and 3-amino-2-oxopropyl phosphate (1-amino-acetone-3-phosphate or AAP) to form pyridoxine 5'-phosphate (PNP) and inorganic phosphate. This chain is Pyridoxine 5'-phosphate synthase, found in Salmonella paratyphi A (strain ATCC 9150 / SARB42).